The chain runs to 112 residues: UPF0060 membrane protein SAV_4756 (112 aa).

Helical transmembrane passes span A8–V28, G33–L53, I62–D82, and V91–G111.

This sequence belongs to the UPF0060 family.

It localises to the cell membrane. This is UPF0060 membrane protein SAV_4756 from Streptomyces avermitilis (strain ATCC 31267 / DSM 46492 / JCM 5070 / NBRC 14893 / NCIMB 12804 / NRRL 8165 / MA-4680).